A 376-amino-acid polypeptide reads, in one-letter code: Actin (376 aa).

This sequence belongs to the actin family.

It is found in the cytoplasm. The protein localises to the cytoskeleton. It carries out the reaction ATP + H2O = ADP + phosphate + H(+). Its function is as follows. Actins are highly conserved proteins that are involved in various types of cell motility and are ubiquitously expressed in all eukaryotic cells. The protein is Actin of Trypanosoma cruzi.